The sequence spans 130 residues: Albumin-1 B (130 aa).

An N-terminal signal peptide occupies residues 1–26 (MASVKLASLMVLFATLGMFLTKNVGA). 3 disulfide bridges follow: cysteine 29–cysteine 46, cysteine 33–cysteine 48, and cysteine 41–cysteine 58. Propeptides lie at residues 64-69 (VFLRTN) and 123-130 (LLKSVSTA).

In terms of processing, the C-terminal glycine may be removed from PA1b. As to expression, major component of both the cotyledons and embryonic axes of mature seeds.

Functionally, PA1b binds to basic 7S globulin (BG) and stimulates its phosphorylation activity. Involved in the signal transduction system to regulate the growth and differentiation as a hormone peptide. Toxic to various insects through binding to a high affinity binding site in the insect gut. This chain is Albumin-1 B, found in Pisum sativum (Garden pea).